The following is a 117-amino-acid chain: LYR motif-containing protein 1 (117 aa).

This sequence belongs to the complex I LYR family.

The protein is LYR motif-containing protein 1 (lyrm1) of Dictyostelium discoideum (Social amoeba).